The following is a 315-amino-acid chain: Petrobactin import system permease protein YclO (315 aa).

Transmembrane regions (helical) follow at residues 7-27 (IALLVGLAIVCIGLFLFYDLG), 40-60 (VAAIVLTGGAIAFSTMIFQTI), 76-96 (LYMLIQTGIIFLFGSANMVIM), 100-120 (INFIISVLLMILFSLVLYQIM), 128-148 (IFFLLLIGIVFGTLFSSLSSF), 172-192 (INTDLLWLAFIIFLLTGVYVW), 223-243 (LIVVAILVSVSTALVGPIMFL), 262-282 (YLIAGSVFISIIALVGGQFVV), and 288-308 (FSTTLSVIINFAGGIYFIYLL).

Belongs to the binding-protein-dependent transport system permease family. FecCD subfamily. The complex is composed of two ATP-binding proteins (YclP), two transmembrane proteins (YclN and YclO) and a solute-binding protein (YclQ).

Its subcellular location is the cell membrane. Its function is as follows. Part of the ABC transporter complex YclNOPQ involved in uptake of ferric-petrobactin. Petrobactin is a photoreactive 3,4-catecholate siderophore produced by many members of the B.cereus group, including B.anthracis. Probably responsible for the translocation of the substrate across the membrane. The chain is Petrobactin import system permease protein YclO (yclO) from Bacillus subtilis (strain 168).